The following is a 314-amino-acid chain: Acetaldehyde dehydrogenase 1 (314 aa).

An NAD(+)-binding site is contributed by 15 to 18 (SGNI). C133 functions as the Acyl-thioester intermediate in the catalytic mechanism. NAD(+)-binding positions include 164–172 (SAGPGTRAN) and N291.

The protein belongs to the acetaldehyde dehydrogenase family.

The catalysed reaction is acetaldehyde + NAD(+) + CoA = acetyl-CoA + NADH + H(+). The polypeptide is Acetaldehyde dehydrogenase 1 (Paraburkholderia xenovorans (strain LB400)).